We begin with the raw amino-acid sequence, 374 residues long: PqqA peptide cyclase (374 aa).

The region spanning 7 to 222 (VTPPLWLLAE…VADYRQRMGA (216 aa)) is the Radical SAM core domain. Positions 21, 25, and 28 each coordinate [4Fe-4S] cluster.

It belongs to the radical SAM superfamily. PqqE family. As to quaternary structure, interacts with PqqD. The interaction is necessary for activity of PqqE. [4Fe-4S] cluster serves as cofactor.

The enzyme catalyses [PQQ precursor protein] + S-adenosyl-L-methionine = E-Y cross-linked-[PQQ precursor protein] + 5'-deoxyadenosine + L-methionine + H(+). Its pathway is cofactor biosynthesis; pyrroloquinoline quinone biosynthesis. Its function is as follows. Catalyzes the cross-linking of a glutamate residue and a tyrosine residue in the PqqA protein as part of the biosynthesis of pyrroloquinoline quinone (PQQ). The polypeptide is PqqA peptide cyclase (Kluyvera intermedia (Enterobacter intermedius)).